Here is a 438-residue protein sequence, read N- to C-terminus: RNA ligase (438 aa).

ATP is bound by residues Y48, R63, and K83. K127 acts as the N6-AMP-lysine intermediate in catalysis. Positions 198, 311, and 313 each coordinate ATP. D342 provides a ligand contact to Mg(2+).

Mg(2+) serves as cofactor. Mn(2+) is required as a cofactor.

Functionally, involved in countering a host defense mechanism which, following viral infection, activates the host induced anticodon nuclease and shuts off viral translation. Repairs 5'-PO4 and 3'-OH groups in the cleaved host tRNA. This chain is RNA ligase, found in Rhodothermus phage RM378 (Bacteriophage RM378).